A 291-amino-acid polypeptide reads, in one-letter code: Elongation factor Ts (291 aa).

Residues 81–84 (TDFV) are involved in Mg(2+) ion dislocation from EF-Tu. Residues 271-291 (EGKEKKDESFADEVMAQVRDS) are disordered.

This sequence belongs to the EF-Ts family.

It is found in the cytoplasm. Its function is as follows. Associates with the EF-Tu.GDP complex and induces the exchange of GDP to GTP. It remains bound to the aminoacyl-tRNA.EF-Tu.GTP complex up to the GTP hydrolysis stage on the ribosome. This chain is Elongation factor Ts, found in Halorhodospira halophila (strain DSM 244 / SL1) (Ectothiorhodospira halophila (strain DSM 244 / SL1)).